The sequence spans 127 residues: Modulator protein MzrA (127 aa).

Topologically, residues 1-10 (MGLQNMTLRR) are cytoplasmic. Residues 11 to 31 (FTLSMSALLLLCALLWLWAAL) form a helical membrane-spanning segment. Topologically, residues 32–127 (EQQESSLAIR…RLRDAPHRLG (96 aa)) are periplasmic.

The protein belongs to the MzrA family. As to quaternary structure, interacts with EnvZ.

The protein resides in the cell inner membrane. Modulates the activity of the EnvZ/OmpR two-component regulatory system, probably by directly modulating EnvZ enzymatic activity and increasing stability of phosphorylated OmpR. The sequence is that of Modulator protein MzrA from Enterobacter lignolyticus (strain SCF1).